The sequence spans 229 residues: Cytochrome c oxidase subunit 2 (229 aa).

Topologically, residues 1–26 are mitochondrial intermembrane; the sequence is MSTWANLGLQDSASPLMEQLIFFHDH. Residues 27–48 form a helical membrane-spanning segment; sequence ALLILVMITVLVGYLMVMLFFN. Over 49–62 the chain is Mitochondrial matrix; that stretch reads SYVNRFLLHGQLIE. Residues 63–82 traverse the membrane as a helical segment; it reads MIWTILPAIILLFIAMPSLR. Over 83-229 the chain is Mitochondrial intermembrane; it reads LLYLLDEINE…IKWISDKVNS (147 aa). 6 residues coordinate Cu cation: His-161, Cys-196, Glu-198, Cys-200, His-204, and Met-207. Glu-198 serves as a coordination point for Mg(2+).

Belongs to the cytochrome c oxidase subunit 2 family. In terms of assembly, component of the cytochrome c oxidase (complex IV, CIV), a multisubunit enzyme composed of a catalytic core of 3 subunits and several supernumerary subunits. The complex exists as a monomer or a dimer and forms supercomplexes (SCs) in the inner mitochondrial membrane with ubiquinol-cytochrome c oxidoreductase (cytochrome b-c1 complex, complex III, CIII). It depends on Cu cation as a cofactor.

The protein localises to the mitochondrion inner membrane. The enzyme catalyses 4 Fe(II)-[cytochrome c] + O2 + 8 H(+)(in) = 4 Fe(III)-[cytochrome c] + 2 H2O + 4 H(+)(out). Functionally, component of the cytochrome c oxidase, the last enzyme in the mitochondrial electron transport chain which drives oxidative phosphorylation. The respiratory chain contains 3 multisubunit complexes succinate dehydrogenase (complex II, CII), ubiquinol-cytochrome c oxidoreductase (cytochrome b-c1 complex, complex III, CIII) and cytochrome c oxidase (complex IV, CIV), that cooperate to transfer electrons derived from NADH and succinate to molecular oxygen, creating an electrochemical gradient over the inner membrane that drives transmembrane transport and the ATP synthase. Cytochrome c oxidase is the component of the respiratory chain that catalyzes the reduction of oxygen to water. Electrons originating from reduced cytochrome c in the intermembrane space (IMS) are transferred via the dinuclear copper A center (CU(A)) of subunit 2 and heme A of subunit 1 to the active site in subunit 1, a binuclear center (BNC) formed by heme A3 and copper B (CU(B)). The BNC reduces molecular oxygen to 2 water molecules using 4 electrons from cytochrome c in the IMS and 4 protons from the mitochondrial matrix. This Drosophila subobscura (Fruit fly) protein is Cytochrome c oxidase subunit 2 (mt:CoII).